The following is a 132-amino-acid chain: Small ribosomal subunit protein uS8 (132 aa).

The protein belongs to the universal ribosomal protein uS8 family. As to quaternary structure, part of the 30S ribosomal subunit. Contacts proteins S5 and S12.

One of the primary rRNA binding proteins, it binds directly to 16S rRNA central domain where it helps coordinate assembly of the platform of the 30S subunit. In Nitrobacter winogradskyi (strain ATCC 25391 / DSM 10237 / CIP 104748 / NCIMB 11846 / Nb-255), this protein is Small ribosomal subunit protein uS8.